We begin with the raw amino-acid sequence, 68 residues long: Small ribosomal subunit protein bS21 (68 aa).

This sequence belongs to the bacterial ribosomal protein bS21 family.

This chain is Small ribosomal subunit protein bS21, found in Paracoccus denitrificans (strain Pd 1222).